Here is a 247-residue protein sequence, read N- to C-terminus: 1-(5-phosphoribosyl)-5-[(5-phosphoribosylamino)methylideneamino] imidazole-4-carboxamide isomerase 2 (247 aa).

The Proton acceptor role is filled by glutamate 8. Residue aspartate 128 is the Proton donor of the active site.

The protein belongs to the HisA/HisF family.

It is found in the cytoplasm. It carries out the reaction 1-(5-phospho-beta-D-ribosyl)-5-[(5-phospho-beta-D-ribosylamino)methylideneamino]imidazole-4-carboxamide = 5-[(5-phospho-1-deoxy-D-ribulos-1-ylimino)methylamino]-1-(5-phospho-beta-D-ribosyl)imidazole-4-carboxamide. It participates in amino-acid biosynthesis; L-histidine biosynthesis; L-histidine from 5-phospho-alpha-D-ribose 1-diphosphate: step 4/9. This is 1-(5-phosphoribosyl)-5-[(5-phosphoribosylamino)methylideneamino] imidazole-4-carboxamide isomerase 2 from Ruegeria pomeroyi (strain ATCC 700808 / DSM 15171 / DSS-3) (Silicibacter pomeroyi).